Reading from the N-terminus, the 500-residue chain is MSMPIPSRQLFIDGEWREPIKKNRIPIINPSNEEIIGDIPAGSSEDIEVAVAAARRALKRNKGREWAATSGAHRARYLRAIAAKVTERKDHFVKLETIDSGKPFDEAVLDIDDVATCFEYFAGQAEAMDAKQKAPVTLPMERFKSHVLRQPIGVVGLITPWNYPLLMATWKIAPALAAGCTAVLKPSELASITCLEFGEVCNEVGLPPGVLNIVTGLGPDAGAPLAAHPDVDKVAFTGSSATGSKVMASAAQLVKPVTLELGGKSPIIVFEDVDIDQVVEWTMFGCFWTNGQICSATSRLLVHESIAAEFIDRLVKWTKNIKISDPFEEGCRLGPVISKGQYDKIMKFISTAKSEGATILCGGSRPEHLKKGYFIEPTIISDISTSMQIWREEVFGPVLCVKTFSSEDEALELANDTEYGLASAVFSKDLERCERVSKLLESGAVWVNCSQPCFVHAPWGGIKRSGFGRELGEWGIENYLNIKQVTSDISNEPWGWYKSP.

The transit peptide at 1–7 (MSMPIPS) directs the protein to the chloroplast. NAD(+) is bound at residue 238-243 (GSSATG). Glu-260 serves as the catalytic Proton acceptor. Cys-294 (nucleophile) is an active-site residue.

Belongs to the aldehyde dehydrogenase family. Homodimer.

Its subcellular location is the plastid. It localises to the chloroplast. The catalysed reaction is betaine aldehyde + NAD(+) + H2O = glycine betaine + NADH + 2 H(+). It functions in the pathway amine and polyamine biosynthesis; betaine biosynthesis via choline pathway; betaine from betaine aldehyde: step 1/1. This chain is Betaine aldehyde dehydrogenase, chloroplastic, found in Beta vulgaris (Sugar beet).